Consider the following 675-residue polypeptide: DNA gyrase subunit B (675 aa).

In terms of domain architecture, Toprim spans 453–567 (SELYVVEGDS…NGHVFLAQPP (115 aa)). Glu-459, Asp-532, and Asp-534 together coordinate Mg(2+).

The protein belongs to the type II topoisomerase GyrB family. Heterotetramer, composed of two GyrA and two GyrB chains. In the heterotetramer, GyrA contains the active site tyrosine that forms a transient covalent intermediate with DNA, while GyrB binds cofactors and catalyzes ATP hydrolysis. Requires Mg(2+) as cofactor. Mn(2+) serves as cofactor. The cofactor is Ca(2+).

Its subcellular location is the cytoplasm. The enzyme catalyses ATP-dependent breakage, passage and rejoining of double-stranded DNA.. In terms of biological role, a type II topoisomerase that negatively supercoils closed circular double-stranded (ds) DNA in an ATP-dependent manner to modulate DNA topology and maintain chromosomes in an underwound state. Negative supercoiling favors strand separation, and DNA replication, transcription, recombination and repair, all of which involve strand separation. Also able to catalyze the interconversion of other topological isomers of dsDNA rings, including catenanes and knotted rings. Type II topoisomerases break and join 2 DNA strands simultaneously in an ATP-dependent manner. The sequence is that of DNA gyrase subunit B from Mycobacterium tuberculosis (strain ATCC 25177 / H37Ra).